Here is a 714-residue protein sequence, read N- to C-terminus: BBSome complex member bbs-2 (714 aa).

Coiled-coil stretches lie at residues Ile-332 to Asp-361 and Met-597 to Ala-627.

As to quaternary structure, part of BBSome complex, that contains at least bbs-1, bbs-2, bbs-4, bbs-5, osm-12, bbs-8/ttc-8 and bbs-9. As to expression, expressed in ciliated cells including amphid and both inner and outer labial neurons of the head and in both phasmid neurons PHA and PHB in the tail at larval stages L1 and L2.

Its subcellular location is the cell projection. The protein localises to the cilium. It is found in the cytoplasm. The protein resides in the cytoskeleton. It localises to the cilium basal body. Its subcellular location is the cilium axoneme. Component of the BBSome complex. The BBSome complex is thought to function as a coat complex required for sorting of specific membrane proteins to the primary cilia. The BBSome complex is required for ciliogenesis but is dispensable for centriolar satellite function. Required for proper BBSome complex assembly and its ciliary localization. Required for cilia biogenesis and both the assembly and movement of intraflagellar transport proteins along the ciliary axoneme. This chain is BBSome complex member bbs-2, found in Caenorhabditis elegans.